The primary structure comprises 163 residues: 2-amino-4-hydroxy-6-hydroxymethyldihydropteridine pyrophosphokinase (163 aa).

Belongs to the HPPK family.

It carries out the reaction 6-hydroxymethyl-7,8-dihydropterin + ATP = (7,8-dihydropterin-6-yl)methyl diphosphate + AMP + H(+). Its pathway is cofactor biosynthesis; tetrahydrofolate biosynthesis; 2-amino-4-hydroxy-6-hydroxymethyl-7,8-dihydropteridine diphosphate from 7,8-dihydroneopterin triphosphate: step 4/4. Functionally, catalyzes the transfer of pyrophosphate from adenosine triphosphate (ATP) to 6-hydroxymethyl-7,8-dihydropterin, an enzymatic step in folate biosynthesis pathway. The polypeptide is 2-amino-4-hydroxy-6-hydroxymethyldihydropteridine pyrophosphokinase (folK) (Helicobacter pylori (strain ATCC 700392 / 26695) (Campylobacter pylori)).